The sequence spans 191 residues: GDP-mannose pyrophosphatase (191 aa).

GDP-alpha-D-mannose-binding positions include Tyr17, 38-40 (KRE), Arg67, and 85-87 (AGL). The region spanning 43-180 (DRGNGATILL…EIRDGKTVLL (138 aa)) is the Nudix hydrolase domain. Positions 85, 100, and 104 each coordinate Mg(2+). The short motif at 86 to 106 (GLLDNDEPEVCIRKEAIEETG) is the Nudix box element. Residues Glu104, Glu127, 150–151 (DE), and Lys176 contribute to the GDP-alpha-D-mannose site. Glu151 serves as a coordination point for Mg(2+).

Belongs to the Nudix hydrolase family. NudK subfamily. In terms of assembly, homodimer. It depends on Mg(2+) as a cofactor.

It catalyses the reaction GDP-alpha-D-mannose + H2O = alpha-D-mannose 1-phosphate + GMP + 2 H(+). In terms of biological role, nucleoside diphosphate sugar hydrolase that hydrolyzes GDP-mannose as its preferred substrate, yielding GMP and mannose-1-phosphate. The polypeptide is GDP-mannose pyrophosphatase (nudK) (Escherichia coli (strain SMS-3-5 / SECEC)).